The following is a 479-amino-acid chain: Glutamate--tRNA ligase (479 aa).

A 'HIGH' region motif is present at residues 21-31; it reads PSPTGYLHVGG. The short motif at 248-252 is the 'KMSKS' region element; sequence KLSKR. Lys-251 is a binding site for ATP.

This sequence belongs to the class-I aminoacyl-tRNA synthetase family. Glutamate--tRNA ligase type 1 subfamily. Monomer.

The protein localises to the cytoplasm. The enzyme catalyses tRNA(Glu) + L-glutamate + ATP = L-glutamyl-tRNA(Glu) + AMP + diphosphate. Catalyzes the attachment of glutamate to tRNA(Glu) in a two-step reaction: glutamate is first activated by ATP to form Glu-AMP and then transferred to the acceptor end of tRNA(Glu). The sequence is that of Glutamate--tRNA ligase from Haemophilus ducreyi (strain 35000HP / ATCC 700724).